The primary structure comprises 191 residues: Protein UL140 (191 aa).

The chain crosses the membrane as a helical span at residues 28-48; it reads TLVVFGFIVTLLFFLFMLYFW.

It localises to the host membrane. The protein is Protein UL140 (UL140) of Homo sapiens (Human).